We begin with the raw amino-acid sequence, 425 residues long: MKKSVDFIGVGTGPFNLSIAALSHQIEELDCLFFDEHPHFSWHPGMLVPDCHMQTVFLKDLVSAVAPTNPYSFVNYLVKHKKFYRFLTSRLRTVSREEFSDYLRWAAEDMNNLYFSHTVENIDFDKKRRLFLVQTSQGEYFARNICLGTGKQPYLPPCVKHMTQSCFHASEMNLRRPDLSGKRITVVGGGQSGADLFLNALRGEWGEAAEINWVSRRNNFNALDEAAFADEYFTPEYISGFSGLEEDIRHQLLDEQKMTSDGITADSLLTIYRELYHRFEVLRKPRNIRLLPSRSVTTLESSGPGWKLLMEHHLDQGRESLESDVVIFATGYRSALPQILPSLMPLITMHDKNTFKVRDDFTLEWSGPKENNIFVVNASMQTHGIAEPQLSLMAWRSARILNRVMGRDLFDLSMPPALIQWRSGT.

Residue 8 to 14 participates in FAD binding; the sequence is IGVGTGP.

The protein belongs to the lysine N(6)-hydroxylase/L-ornithine N(5)-oxygenase family. FAD serves as cofactor.

The protein localises to the cytoplasm. Its subcellular location is the cell membrane. The catalysed reaction is L-lysine + NADPH + O2 = N(6)-hydroxy-L-lysine + NADP(+) + H2O. It participates in siderophore biosynthesis; aerobactin biosynthesis. Functionally, flavoprotein monooxygenase required for N-hydroxylation of lysine. Involved in the biosynthesis of the siderophore aerobactin which is a chelator that mediates the high-affinity iron transport systems induced by the organism under iron-stressed conditions. In Escherichia coli, this protein is L-lysine N6-monooxygenase.